The sequence spans 300 residues: Ribonuclease HIII (300 aa).

Residues 83-300 (IPIIGSDEVG…THKAQALLTK (218 aa)) form the RNase H type-2 domain. Residues Asp89, Glu90, and Asp194 each contribute to the a divalent metal cation site.

The protein belongs to the RNase HII family. RnhC subfamily. Mn(2+) serves as cofactor. It depends on Mg(2+) as a cofactor.

The protein localises to the cytoplasm. It carries out the reaction Endonucleolytic cleavage to 5'-phosphomonoester.. Its function is as follows. Endonuclease that specifically degrades the RNA of RNA-DNA hybrids. In Streptococcus pyogenes serotype M28 (strain MGAS6180), this protein is Ribonuclease HIII.